The sequence spans 377 residues: Fructose-bisphosphate aldolase 1, chloroplastic (377 aa).

Substrate contacts are provided by arginine 74 and lysine 164. Residue glutamate 204 is the Proton acceptor of the active site. The active-site Schiff-base intermediate with dihydroxyacetone-P is lysine 246.

It belongs to the class I fructose-bisphosphate aldolase family.

It localises to the plastid. Its subcellular location is the chloroplast. The enzyme catalyses beta-D-fructose 1,6-bisphosphate = D-glyceraldehyde 3-phosphate + dihydroxyacetone phosphate. It participates in carbohydrate degradation; glycolysis; D-glyceraldehyde 3-phosphate and glycerone phosphate from D-glucose: step 4/4. The polypeptide is Fructose-bisphosphate aldolase 1, chloroplastic (ALDCHL) (Chlamydomonas reinhardtii (Chlamydomonas smithii)).